Here is a 210-residue protein sequence, read N- to C-terminus: Probable GTP-binding protein EngB (210 aa).

The region spanning 25 to 199 (TGIEVAFAGR…RQKLDSWFNE (175 aa)) is the EngB-type G domain. GTP is bound by residues 33-40 (GRSNAGKS), 60-64 (GRTQL), 78-81 (DLPG), 145-148 (TKAD), and 178-180 (FSS). 2 residues coordinate Mg(2+): Ser40 and Thr62.

Belongs to the TRAFAC class TrmE-Era-EngA-EngB-Septin-like GTPase superfamily. EngB GTPase family. It depends on Mg(2+) as a cofactor.

Its function is as follows. Necessary for normal cell division and for the maintenance of normal septation. This Klebsiella pneumoniae subsp. pneumoniae (strain ATCC 700721 / MGH 78578) protein is Probable GTP-binding protein EngB.